We begin with the raw amino-acid sequence, 31 residues long: Cyclotide vico-A (31 aa).

A cross-link (cyclopeptide (Gly-Asn)) is located at residues 1–31 (GSIPCAESCVYIPCFTGIAGCSCKNKVCYYN). 3 disulfides stabilise this stretch: Cys5/Cys21, Cys9/Cys23, and Cys14/Cys28.

Belongs to the cyclotide family. Bracelet subfamily. Post-translationally, this is a cyclic peptide.

Probably participates in a plant defense mechanism. The protein is Cyclotide vico-A of Viola cotyledon (Violeta).